Reading from the N-terminus, the 1263-residue chain is Valine--tRNA ligase (1263 aa).

An N-acetylserine modification is found at S2. The GST C-terminal domain occupies G89 to Q219. The disordered stretch occupies residues Q218–A294. 2 stretches are compositionally biased toward basic and acidic residues: residues L234–Q248 and H259–P274. Residues P343 to H353 carry the 'HIGH' region motif. Residues S436 and S526 each carry the phosphoserine modification. The residue at position 644 (K644) is an N6-acetyllysine. Positions K861 to S865 match the 'KMSKS' region motif. K864 provides a ligand contact to ATP.

It belongs to the class-I aminoacyl-tRNA synthetase family. In terms of assembly, forms high-molecular-mass aggregates with elongation factor 1.

It catalyses the reaction tRNA(Val) + L-valine + ATP = L-valyl-tRNA(Val) + AMP + diphosphate. With respect to regulation, can be regulated by protein kinase C-dependent phosphorylation. The sequence is that of Valine--tRNA ligase (Vars1) from Mus musculus (Mouse).